A 122-amino-acid polypeptide reads, in one-letter code: Large ribosomal subunit protein bL12 (122 aa).

It belongs to the bacterial ribosomal protein bL12 family. In terms of assembly, homodimer. Part of the ribosomal stalk of the 50S ribosomal subunit. Forms a multimeric L10(L12)X complex, where L10 forms an elongated spine to which 2 to 4 L12 dimers bind in a sequential fashion. Binds GTP-bound translation factors.

In terms of biological role, forms part of the ribosomal stalk which helps the ribosome interact with GTP-bound translation factors. Is thus essential for accurate translation. The polypeptide is Large ribosomal subunit protein bL12 (Azotobacter vinelandii (strain DJ / ATCC BAA-1303)).